The following is a 120-amino-acid chain: UPF0715 membrane protein YwlA (120 aa).

A run of 4 helical transmembrane segments spans residues tyrosine 3–isoleucine 23, phenylalanine 26–alanine 46, leucine 63–leucine 83, and alanine 95–leucine 115.

Belongs to the UPF0715 family.

It is found in the cell membrane. The protein is UPF0715 membrane protein YwlA (ywlA) of Bacillus subtilis (strain 168).